Consider the following 619-residue polypeptide: Glucokinase regulatory protein (619 aa).

2 consecutive SIS domains span residues 90–283 and 319–498; these read VQEV…AESN and TATS…LRGK. 107–109 contacts keto-D-fructose 6-phosphate; the sequence is CGT. Beta-D-fructose 1-phosphate-binding positions include 109–110, Glu-153, 179–181, and Glu-347; these read TS and SCG. Keto-D-fructose 6-phosphate contacts are provided by residues 179–183 and Glu-347; that span reads SCGLS. The segment at 462–464 is essential for interaction with GCK; it reads ILF. Residue Lys-513 coordinates keto-D-fructose 6-phosphate. A beta-D-fructose 1-phosphate-binding site is contributed by Lys-513.

This sequence belongs to the GCKR family. Interacts (fructose 6-phosphate bound form) with gck.

Its subcellular location is the nucleus. The protein resides in the cytoplasm. The protein localises to the mitochondrion. Its function is as follows. Regulates glucokinase (gck) by forming an inactive complex with this enzyme. The affinity of gckr for gck is modulated by fructose metabolites: gckr with bound fructose 6-phosphate has increased affinity for gck, while gckr with bound fructose 1-phosphate has strongly decreased affinity for gck and does not inhibit gck activity. In Xenopus laevis (African clawed frog), this protein is Glucokinase regulatory protein.